A 433-amino-acid chain; its full sequence is Serine--tRNA ligase (433 aa).

235–237 (TSE) serves as a coordination point for L-serine. Residue 266–268 (RSE) coordinates ATP. E289 contacts L-serine. ATP is bound at residue 353-356 (EISS). Residue S388 participates in L-serine binding.

The protein belongs to the class-II aminoacyl-tRNA synthetase family. Type-1 seryl-tRNA synthetase subfamily. In terms of assembly, homodimer. The tRNA molecule binds across the dimer.

It localises to the cytoplasm. The catalysed reaction is tRNA(Ser) + L-serine + ATP = L-seryl-tRNA(Ser) + AMP + diphosphate + H(+). The enzyme catalyses tRNA(Sec) + L-serine + ATP = L-seryl-tRNA(Sec) + AMP + diphosphate + H(+). Its pathway is aminoacyl-tRNA biosynthesis; selenocysteinyl-tRNA(Sec) biosynthesis; L-seryl-tRNA(Sec) from L-serine and tRNA(Sec): step 1/1. In terms of biological role, catalyzes the attachment of serine to tRNA(Ser). Is also able to aminoacylate tRNA(Sec) with serine, to form the misacylated tRNA L-seryl-tRNA(Sec), which will be further converted into selenocysteinyl-tRNA(Sec). This is Serine--tRNA ligase from Burkholderia pseudomallei (strain 1106a).